The primary structure comprises 238 residues: Probable transcriptional regulatory protein SPD_1725 (238 aa).

The protein belongs to the TACO1 family. YeeN subfamily.

The protein resides in the cytoplasm. The chain is Probable transcriptional regulatory protein SPD_1725 from Streptococcus pneumoniae serotype 2 (strain D39 / NCTC 7466).